Here is a 410-residue protein sequence, read N- to C-terminus: Mating-type locus allele B6 protein (410 aa).

The segment at 1 to 110 (MSRDPKLSLS…VNVASPAVEY (110 aa)) is variable domain between B alleles. Residues 107–184 (AVEYRNLSED…NARRRSGWSH (78 aa)) constitute a DNA-binding region (homeobox; TALE-type). Residues 111–410 (RNLSEDLPAY…PFFCLSIAFV (300 aa)) are highly conserved between B alleles. Disordered regions lie at residues 202-224 (RAKL…PSDD), 278-335 (TPKP…TPEL), and 373-393 (KARG…QQPD). The span at 205 to 219 (LSSSNQSTPPSLTSE) shows a compositional bias: polar residues. Residues 276-308 (KKTPKPGMPRPVTTVAKRQPARKTKPAAKPKSR) carry the Nuclear localization signal motif. The segment covering 294 to 307 (QPARKTKPAAKPKS) has biased composition (basic residues). A compositionally biased stretch (polar residues) spans 312–335 (PRASTTPSIDSTLDSSKLESTPEL). Positions 333–410 (PELSMCSTAD…PFFCLSIAFV (78 aa)) are not essential for B6 function. Positions 375 to 388 (RGNRKVKALPKRAG) are enriched in basic residues.

Belongs to the TALE/M-ATYP homeobox family.

It localises to the nucleus. Its function is as follows. The B locus has at least 25 alleles, and any combination of two different B alleles yields a multimeric regulatory protein, that activates genes responsible for the pathogenicity and for the sexual development of the fungus within the corn plant. This Mycosarcoma maydis (Corn smut fungus) protein is Mating-type locus allele B6 protein.